Here is a 115-residue protein sequence, read N- to C-terminus: MRRFVLIFVLLILPFQFSWAAAARYCQHEKATATWHLGHHEHRHQQPEGKTDAEKKPFVDTDCGVCHLVSLPFVYGQTQDVLIANRVEVTDTQHSSEFSSLNARAPDRPQWQRLA.

The first 20 residues, 1-20 (MRRFVLIFVLLILPFQFSWA), serve as a signal peptide directing secretion. Residues 93 to 102 (QHSSEFSSLN) show a composition bias toward polar residues. Residues 93 to 115 (QHSSEFSSLNARAPDRPQWQRLA) are disordered.

The protein resides in the periplasm. In terms of biological role, component of the czc cation-efflux system that confers resistance to cobalt, zinc and cadmium. May have a regulatory function. In Cupriavidus metallidurans (strain ATCC 43123 / DSM 2839 / NBRC 102507 / CH34) (Ralstonia metallidurans), this protein is Cobalt-zinc-cadmium resistance protein CzcI (czcI).